A 519-amino-acid chain; its full sequence is Sorting nexin-2 (519 aa).

Residues 1–104 (MAAEREPPPL…EPSPAVTPVT (104 aa)) form a disordered region. Low complexity-rich tracts occupy residues 27-50 (LFTS…LPAE) and 93-104 (SSEPSPAVTPVT). S97 carries the phosphoserine modification. A phosphothreonine mark is found at T101 and T104. Phosphoserine is present on residues S117 and S119. A PX domain is found at 140-269 (FDIEIGVSDP…QFLESSELPR (130 aa)). 4 residues coordinate a 1,2-diacyl-sn-glycero-3-phospho-(1D-myo-inositol-3-phosphate): R183, S185, K211, and R235. S185 is subject to Phosphoserine. Residues 260 to 519 (QFLESSELPR…AFLPEAKAIA (260 aa)) form an interaction with RhoG region. S277 carries the phosphoserine modification. The interval 278–295 (GAGILRMVNKAADAVNKM) is membrane-binding amphipathic helix. Residues 299–519 (MNESDAWFEE…AFLPEAKAIA (221 aa)) form the BAR domain. K469 carries the post-translational modification N6-acetyllysine.

It belongs to the sorting nexin family. In terms of assembly, predominantly forms heterodimers with BAR domain-containing sorting nexins SNX5, SNX6 and SNX32; can self-associate to form homodimers. The heterodimers are proposed to self-assemble into helical arrays on the membrane to stabilize and expand local membrane curvature underlying endosomal tubule formation. Thought to be a component of the originally described retromer complex (also called SNX-BAR retromer) which is a pentamer containing the heterotrimeric retromer cargo-selective complex (CSC), also described as vacuolar protein sorting subcomplex (VPS), and a heterodimeric membrane-deforming subcomplex formed between SNX1 or SNX2 and SNX5 or SNX6 (also called SNX-BAR subcomplex); the respective CSC and SNX-BAR subcomplexes associate with low affinity. Interacts with SNX5, SNX6, SNX32, VPS26A, VPS29, VPS35, FNBP1, KALRN, RHOG (GDP-bound form).

Its subcellular location is the early endosome membrane. The protein localises to the cell projection. It localises to the lamellipodium. Its function is as follows. Involved in several stages of intracellular trafficking. Interacts with membranes containing phosphatidylinositol 3-phosphate (PtdIns(3P)) or phosphatidylinositol 3,5-bisphosphate (PtdIns(3,5)P2). Acts in part as component of the retromer membrane-deforming SNX-BAR subcomplex. The SNX-BAR retromer mediates retrograde transport of cargo proteins from endosomes to the trans-Golgi network (TGN) and is involved in endosome-to-plasma membrane transport for cargo protein recycling. The SNX-BAR subcomplex functions to deform the donor membrane into a tubular profile called endosome-to-TGN transport carrier (ETC). Can sense membrane curvature and has in vitro vesicle-to-membrane remodeling activity. Required for retrograde endosome-to-TGN transport of TGN38. Promotes KALRN- and RHOG-dependent but retromer-independent membrane remodeling such as lamellipodium formation; the function is dependent on GEF activity of KALRN. In Homo sapiens (Human), this protein is Sorting nexin-2 (SNX2).